The sequence spans 172 residues: DNA-directed RNA polymerase II subunit RPB7 (172 aa).

The protein belongs to the eukaryotic RPB7/RPC8 RNA polymerase subunit family. Component of the RNA polymerase II (Pol II) core complex consisting of 12 subunits: a ten-subunit catalytic core composed of POLR2A/RPB1, POLR2B/RPB2, POLR2C/RPB3, POLR2I/RPB9, POLR2J/RPB11, POLR2E/RPABC1, POLR2F/RPABC2, POLR2H/RPABC3, POLR2K/RPABC4 and POLR2L/RPABC5 and a mobile stalk composed of two subunits POLR2D/RPB4 and POLR2G/RPB7, protruding from the core and functioning primarily in transcription initiation. Part of Pol II(G) complex, in which Pol II core associates with an additional subunit POLR2M; unlike conventional Pol II, Pol II(G) functions as a transcriptional repressor. Part of TBP-based Pol II pre-initiation complex (PIC), in which Pol II core assembles with general transcription factors and other specific initiation factors including GTF2E1, GTF2E2, GTF2F1, GTF2F2, TCEA1, ERCC2, ERCC3, GTF2H2, GTF2H3, GTF2H4, GTF2H5, GTF2A1, GTF2A2, GTF2B and TBP; this large multi-subunit PIC complex mediates DNA unwinding and targets Pol II core to the transcription start site where the first phosphodiester bond forms.

The protein localises to the nucleus. Functionally, core component of RNA polymerase II (Pol II), a DNA-dependent RNA polymerase which synthesizes mRNA precursors and many functional non-coding RNAs using the four ribonucleoside triphosphates as substrates. Pol II is the central component of the basal RNA polymerase II transcription machinery. It is composed of mobile elements that move relative to each other. POLR2G/RPB7 is part of a subcomplex with POLR2D/RPB4 that binds to a pocket formed by POLR2A/RPB1, POLR2B/RPB2 and POLR2F/RPABC2 at the base of the clamp element. The POLR2D/RPB4-POLR2G/RPB7 subcomplex seems to lock the clamp via POLR2G/RPB7 in the closed conformation thus preventing double-stranded DNA to enter the active site cleft. The POLR2D/RPB4-POLR2G/RPB7 subcomplex binds single-stranded DNA and RNA. The sequence is that of DNA-directed RNA polymerase II subunit RPB7 (POLR2G) from Bos taurus (Bovine).